We begin with the raw amino-acid sequence, 248 residues long: MPPILILLTLLLPLRAGAEEIIGGHEVKPHSRPYMARVRFVKDNGKRHSCGGFLVQDYFVLTAAHCTGSSMRVILGAHNIRAKEETQQIIPVAKAIPHPAYDDKDNTSDIMLLKLESKAKRTKAVRPLKLPRPNARVKPGHVCSVAGWGRTSINATQRSSCLREAQLIIQKDKECKKYFYKYFKTMQICAGDPKKIQSTYSGDSGGPLVCNNKAYGVLTYGLNRTIGPGVFTKVVHYLPWISRNMKLL.

The first 18 residues, 1-18 (MPPILILLTLLLPLRAGA), serve as a signal peptide directing secretion. A propeptide spanning residues 19–20 (EE) is cleaved from the precursor. The Peptidase S1 domain occupies 21–246 (IIGGHEVKPH…YLPWISRNMK (226 aa)). Cys50 and Cys66 are joined by a disulfide. The Charge relay system role is filled by His65. N-linked (GlcNAc...) asparagine glycosylation is present at Asn106. Catalysis depends on Asp109, which acts as the Charge relay system. Disulfide bonds link Cys143–Cys210 and Cys175–Cys189. An N-linked (GlcNAc...) asparagine glycan is attached at Asn154. The Charge relay system role is filled by Ser204. Residue Asn223 is glycosylated (N-linked (GlcNAc...) asparagine).

Belongs to the peptidase S1 family. Granzyme subfamily.

The protein resides in the cytolytic granule. Its function is as follows. This enzyme is probably necessary for target cell lysis in cell-mediated immune responses. This chain is Granzyme F (Gzmf), found in Mus musculus (Mouse).